The chain runs to 711 residues: MQRTLSKVILNSGKNNLLKSSNLLNSNLLKATTTNIIGIKTINNNNNVNSIIGFKSLNKRYFTSNTPKVEEEDDEIAPDEAIKAEEKIKETERVIGLSEKLSFQTETQKILHIVAESLYTEKEVFIRELISNASDAIEKVRHTQLTNASMIEDASIPFEIKISTDEDNKTLIIQDSGIGMTKDEMIKNLGKIGYSGSSDFIKKLGENPDKASIIGQFGVGFYSCFMVGHTIKIYTKSATPGSKGYLWESDGTGSYSITEAEGVSRGTKIIIHLKPSSYEYSKKSIVENIIKKYSNFVGFPIALNGTTVNTIKPLWTLNKNAISEEEHKEFYQFLSKSYDTPSYRVHFSTDTPLSIRSIFYIPSQHMEKYGMGKMEPGVSLFSRKVLIQQKANGILPEWMRFVRGVVDSEDIPLNVSREHLQDNGLIQRISSVLVKRILKHLNDEAKSDPEKFNVFMTEFGGFFKEGIITDFKWKDEISKLLRFESSNGSTASKTDAVSLEQYVSRMKPEQKNIYFLSVPNRAVGLSSPYYEPFQLKDIEVIFLYNAVDEFVLTNVGHFGDKKIVSVESKEAEEFLATNQDKKTETLSQDEIDKFLSWVSTVASDKVTQAKSTTRSISSPAIIIDHESANFRRMLKMVEPGKQHETPKQVVEFNMNHPIILKLVQQTESNPTIAKLVIDQVVDNAFVSAGLIEDNREMIPRINQLLDSLLTK.

A mitochondrion-targeting transit peptide spans 1–62 (MQRTLSKVIL…GFKSLNKRYF (62 aa)). The ATP site is built by Asn-132, Asp-175, Asn-188, Phe-221, and Arg-417. A dimerization region spans residues 303 to 711 (LNGTTVNTIK…NQLLDSLLTK (409 aa)).

Belongs to the heat shock protein 90 family.

It is found in the cytoplasm. Its subcellular location is the cell cortex. The protein localises to the cytoskeleton. It localises to the mitochondrion. The protein resides in the spore. It is found in the perispore. Its subcellular location is the nucleus. The protein localises to the nucleolus. Its function is as follows. Chaperone that expresses an ATPase activity. The sequence is that of TNF receptor-associated protein 1 homolog, mitochondrial (trap1) from Dictyostelium discoideum (Social amoeba).